Consider the following 733-residue polypeptide: 1,4-alpha-glucan branching enzyme GlgB (733 aa).

Aspartate 412 (nucleophile) is an active-site residue. The active-site Proton donor is glutamate 467.

Belongs to the glycosyl hydrolase 13 family. GlgB subfamily. Monomer.

The enzyme catalyses Transfers a segment of a (1-&gt;4)-alpha-D-glucan chain to a primary hydroxy group in a similar glucan chain.. The protein operates within glycan biosynthesis; glycogen biosynthesis. In terms of biological role, catalyzes the formation of the alpha-1,6-glucosidic linkages in glycogen by scission of a 1,4-alpha-linked oligosaccharide from growing alpha-1,4-glucan chains and the subsequent attachment of the oligosaccharide to the alpha-1,6 position. The protein is 1,4-alpha-glucan branching enzyme GlgB of Burkholderia vietnamiensis (strain G4 / LMG 22486) (Burkholderia cepacia (strain R1808)).